The chain runs to 156 residues: ATP synthase subunit b 1 (156 aa).

A helical membrane pass occupies residues L7 to P27.

This sequence belongs to the ATPase B chain family. F-type ATPases have 2 components, F(1) - the catalytic core - and F(0) - the membrane proton channel. F(1) has five subunits: alpha(3), beta(3), gamma(1), delta(1), epsilon(1). F(0) has three main subunits: a(1), b(2) and c(10-14). The alpha and beta chains form an alternating ring which encloses part of the gamma chain. F(1) is attached to F(0) by a central stalk formed by the gamma and epsilon chains, while a peripheral stalk is formed by the delta and b chains.

It localises to the cell inner membrane. F(1)F(0) ATP synthase produces ATP from ADP in the presence of a proton or sodium gradient. F-type ATPases consist of two structural domains, F(1) containing the extramembraneous catalytic core and F(0) containing the membrane proton channel, linked together by a central stalk and a peripheral stalk. During catalysis, ATP synthesis in the catalytic domain of F(1) is coupled via a rotary mechanism of the central stalk subunits to proton translocation. Its function is as follows. Component of the F(0) channel, it forms part of the peripheral stalk, linking F(1) to F(0). This is ATP synthase subunit b 1 from Albidiferax ferrireducens (strain ATCC BAA-621 / DSM 15236 / T118) (Rhodoferax ferrireducens).